A 289-amino-acid polypeptide reads, in one-letter code: Serine/threonine-protein phosphatase Pgam5, mitochondrial (289 aa).

Residues 7–23 (FACGTGAGLAAYYLQRL) traverse the membrane as a helical segment.

The protein belongs to the phosphoglycerate mutase family. BPG-dependent PGAM subfamily. As to quaternary structure, interacts with Pk92B/ASK1.

Its subcellular location is the mitochondrion outer membrane. The catalysed reaction is O-phospho-L-seryl-[protein] + H2O = L-seryl-[protein] + phosphate. It catalyses the reaction O-phospho-L-threonyl-[protein] + H2O = L-threonyl-[protein] + phosphate. Its function is as follows. Displays phosphatase activity for serine/threonine residues, and dephosphorylates and activates Pk92B kinase. Has apparently no phosphoglycerate mutase activity. This is Serine/threonine-protein phosphatase Pgam5, mitochondrial from Drosophila simulans (Fruit fly).